The following is an 87-amino-acid chain: FXYD domain-containing ion transport regulator 3 (87 aa).

The N-terminal stretch at 1 to 20 (MQKVTLGLLVFLAGFPVLDA) is a signal peptide. The Extracellular portion of the chain corresponds to 21–38 (NDLEDKNSPFYYDWHSLQ). The chain crosses the membrane as a helical span at residues 39–59 (VGGLICAGVLCAMGIIIVMSA). Topologically, residues 60–87 (KCKCKFGQKSGHHPGETPPLITPGSAQS) are cytoplasmic. The interval 66-87 (GQKSGHHPGETPPLITPGSAQS) is disordered.

Belongs to the FXYD family. As to quaternary structure, regulatory subunit of the sodium/potassium-transporting ATPase which is composed of a catalytic alpha subunit, a non-catalytic beta subunit and an additional regulatory subunit. Interacts with catalytic alpha subunit ATP1A1. Also interacts with non-catalytic beta subunit ATP1B1. Interacts with the ATP1A1-ATP1B1, ATP1A2-ATP1B1 and ATP1A3-ATP1B1 NKA isozymes. Post-translationally, glutathionylated. As to expression, isoform 1: Expressed mainly in differentiated cells (at protein level). Isoform 2: Expressed mainly in undifferentiated cells (at protein level).

The protein localises to the cell membrane. Functionally, associates with and regulates the activity of the sodium/potassium-transporting ATPase (NKA) which transports Na(+) out of the cell and K(+) into the cell. Reduces glutathionylation of the NKA beta-1 subunit ATP1B1, thus reversing glutathionylation-mediated inhibition of ATP1B1. Induces a hyperpolarization-activated chloride current when expressed in Xenopus oocytes. Decreases the apparent K+ and Na+ affinity of the sodium/potassium-transporting ATPase over a large range of membrane potentials. In terms of biological role, decreases the apparent K+ affinity of the sodium/potassium-transporting ATPase only at slightly negative and positive membrane potentials and increases the apparent Na+ affinity over a large range of membrane potentials. In Homo sapiens (Human), this protein is FXYD domain-containing ion transport regulator 3 (FXYD3).